A 131-amino-acid polypeptide reads, in one-letter code: D-ribose pyranase (131 aa).

Histidine 20 serves as the catalytic Proton donor. Substrate is bound by residues aspartate 28, histidine 98, and 120 to 122 (YSN).

It belongs to the RbsD / FucU family. RbsD subfamily. Homodecamer.

The protein localises to the cytoplasm. It catalyses the reaction beta-D-ribopyranose = beta-D-ribofuranose. Its pathway is carbohydrate metabolism; D-ribose degradation; D-ribose 5-phosphate from beta-D-ribopyranose: step 1/2. Its function is as follows. Catalyzes the interconversion of beta-pyran and beta-furan forms of D-ribose. The protein is D-ribose pyranase of Latilactobacillus sakei subsp. sakei (strain 23K) (Lactobacillus sakei subsp. sakei).